Reading from the N-terminus, the 294-residue chain is MKQKIFQILTALCCIFYVMSAQAIDAKKLYGLQGPKLIYQAPVTKSHHYVVKGVSYRTQTSKEASGYARDGIASFYHKKFNGRKTASGQIYNENLYTAAHKTLPLNSYVLVTNLRNQRKVIVRINDRGPFVKGRIIDLSRAAAREIGLIGSGVGHVRVELIQLDRQGRISGAASATLAKLAKNQEAVNMLLQGEDTVELTQHTEEKTVKAATTKPEKYTTVYKIRILNLDSKKQAEKLISKLGREDIRADITVNQDKFDIYFGPFSDKSQVNDVKAQLRKLNYSKPLIVYTFDD.

The signal sequence occupies residues 1–23 (MKQKIFQILTALCCIFYVMSAQA). Residues 216–291 (EKYTTVYKIR…NYSKPLIVYT (76 aa)) form the SPOR domain.

This sequence belongs to the RlpA family.

Its function is as follows. Lytic transglycosylase with a strong preference for naked glycan strands that lack stem peptides. In Pasteurella multocida (strain Pm70), this protein is Endolytic peptidoglycan transglycosylase RlpA.